A 60-amino-acid polypeptide reads, in one-letter code: Homeobox protein CHOX-CAD2 (60 aa).

A DNA-binding region (homeobox) is located at residues 1 to 60 (KEKYRVVYTDHQRLELEKEFHCNRYITIRRKSELAVNLGLSERQVKSWFQNRRAKERKII).

The protein belongs to the Caudal homeobox family.

Its subcellular location is the nucleus. The chain is Homeobox protein CHOX-CAD2 (CHOX-CAD2) from Gallus gallus (Chicken).